The following is a 614-amino-acid chain: 1-deoxy-D-xylulose-5-phosphate synthase (614 aa).

Thiamine diphosphate-binding positions include histidine 74 and 115-117; that span reads AHS. Residue aspartate 146 coordinates Mg(2+). Residues 147–148, asparagine 175, tyrosine 282, and glutamate 363 contribute to the thiamine diphosphate site; that span reads GA. Mg(2+) is bound at residue asparagine 175.

It belongs to the transketolase family. DXPS subfamily. In terms of assembly, homodimer. It depends on Mg(2+) as a cofactor. Thiamine diphosphate serves as cofactor.

The catalysed reaction is D-glyceraldehyde 3-phosphate + pyruvate + H(+) = 1-deoxy-D-xylulose 5-phosphate + CO2. The protein operates within metabolic intermediate biosynthesis; 1-deoxy-D-xylulose 5-phosphate biosynthesis; 1-deoxy-D-xylulose 5-phosphate from D-glyceraldehyde 3-phosphate and pyruvate: step 1/1. In terms of biological role, catalyzes the acyloin condensation reaction between C atoms 2 and 3 of pyruvate and glyceraldehyde 3-phosphate to yield 1-deoxy-D-xylulose-5-phosphate (DXP). The polypeptide is 1-deoxy-D-xylulose-5-phosphate synthase (Nitrosomonas eutropha (strain DSM 101675 / C91 / Nm57)).